Consider the following 370-residue polypeptide: ABSCISIC ACID-INSENSITIVE 5-like protein 8 (370 aa).

3 positions are modified to phosphoserine: Ser-25, Ser-44, and Ser-69. The tract at residues 56–77 is disordered; it reads SAEETQEGSQRQGSTTLPPTLS. The span at 62-77 shows a compositional bias: polar residues; that stretch reads EGSQRQGSTTLPPTLS. A Phosphothreonine modification is found at Thr-111. Residues 260–278 are compositionally biased toward polar residues; that stretch reads ESSLLSPSPYISNGSTSTR. Positions 260–281 are disordered; it reads ESSLLSPSPYISNGSTSTRGGK. The region spanning 293–356 is the bZIP domain; sequence VDKKLRRKIK…MEPGMISLHE (64 aa). Positions 295–314 are basic motif; sequence KKLRRKIKNRESAARSRARK. The interval 328–342 is leucine-zipper; the sequence is LKKDYEELLKQHVEL. The segment at 349 to 370 is disordered; the sequence is PGMISLHERPERKLRRTKSDIK. The segment covering 354-370 has biased composition (basic and acidic residues); it reads LHERPERKLRRTKSDIK.

The protein belongs to the bZIP family. ABI5 subfamily. As to quaternary structure, DNA-binding heterodimer.

The protein localises to the nucleus. Could participate in abscisic acid-regulated gene expression. This is ABSCISIC ACID-INSENSITIVE 5-like protein 8 (BZIP15) from Arabidopsis thaliana (Mouse-ear cress).